The primary structure comprises 506 residues: Glucosidase 2 subunit beta (506 aa).

A signal peptide spans 1-23 (MKFSQWYTLTAPLLISSLYTVNA). C86 and C108 form a disulfide bridge. Coiled coils occupy residues 172-243 (SLVA…LYET) and 338-374 (ESYR…LEYH). The MRH domain maps to 279 to 474 (ESCNNHLSML…KMKSPAACSP (196 aa)). Cystine bridges form between C431-C460 and C445-C472. An ER retrieval sequence motif is present at residues 503–506 (VDEL).

As to quaternary structure, heterodimer of a catalytic subunit alpha (gls2) and a subunit beta (gtb1).

The protein localises to the endoplasmic reticulum. In terms of biological role, subunit of glucosidase 2, which cleaves sequentially the 2 innermost alpha-1,3-linked glucose residues from the Glc(2)Man(9)GlcNAc(2) oligosaccharide precursor of immature glycoproteins in the endoplasmic reticulum (ER). Specifically required for the cleavage of the final glucose. The subunit beta retains the catalytic subunit alpha in the ER. The sequence is that of Glucosidase 2 subunit beta (gtb1) from Schizosaccharomyces pombe (strain 972 / ATCC 24843) (Fission yeast).